Reading from the N-terminus, the 195-residue chain is MARCKS-related protein (195 aa).

Residues 1-195 (MGSQSSKAPR…PTPASAEQNE (195 aa)) are disordered. G2 carries N-myristoyl glycine lipidation. T14 is modified (phosphothreonine). The span at 16-26 (EEAAGASPAKA) shows a compositional bias: low complexity. 4 positions are modified to phosphoserine: S22, S36, S41, and S48. A compositionally biased stretch (low complexity) spans 53–64 (GTDEAAGATGDA). A Phosphoserine modification is found at S71. Residues 76 to 85 (AKGEVPPKET) are compositionally biased toward basic and acidic residues. Phosphothreonine is present on T85. Residues 86–98 (PKKKKKFSFKKPF) are compositionally biased toward basic residues. An effector domain involved in lipid-binding and calmodulin-binding region spans residues 87–110 (KKKKKFSFKKPFKLSGLSFKRNRK). Phosphoserine is present on residues S93, S101, S104, S119, S120, and S135. At T148 the chain carries Phosphothreonine. Phosphoserine occurs at positions 151, 162, and 165. A compositionally biased stretch (low complexity) spans 153–195 (EPQAKGAEASAASEEEAGPQATEPSTPSGPESGPTPASAEQNE). Phosphothreonine is present on residues T178 and T187.

This sequence belongs to the MARCKS family. Binds to filamentous actin (F-actin), but not to monomeric G-actin, independently of its phosphorylation status. In terms of processing, phosphorylated. Phosphorylation at Ser-120 and Thr-178 is non-redundantly catalyzed by MAPK8 in vivo. Phosphorylation at Thr-148 is preferentially catalyzed by MAPK8 in vivo, but this modification can also be catalyzed by other kinases in the absence of MAPK8. May be phosphorylated by protein kinase C, which disrupts the interaction with calmodulin.

It is found in the cytoplasm. Its subcellular location is the cytoskeleton. The protein localises to the cell membrane. Its function is as follows. Controls cell movement by regulating actin cytoskeleton homeostasis and filopodium and lamellipodium formation. When unphosphorylated, induces cell migration. When phosphorylated by MAPK8, induces actin bundles formation and stabilization, thereby reducing actin plasticity, hence restricting cell movement, including neuronal migration. May be involved in coupling the protein kinase C and calmodulin signal transduction systems. This chain is MARCKS-related protein (MARCKSL1), found in Homo sapiens (Human).